Consider the following 903-residue polypeptide: FIGNL1-interacting regulator of recombination and mitosis (903 aa).

S101 and S795 each carry phosphoserine. Position 843 is an N6-acetyllysine (K843).

In terms of assembly, interacts (via its N-terminal region) with PLK1; controls PLK1 kinase activity. Interacts (via the KVVXF motif) with PPP1CC; controls PLK1 kinase activity. Interacts with FIGNL1; may regulate homologous recombination. Post-translationally, phosphorylation at Ser-101 by PLK1 strengthens FIRRM-PLK1 interaction. Phosphorylation at Ser-795 by PLK1 negatively regulates its interaction with PPP1CC.

It is found in the chromosome. Its subcellular location is the centromere. The protein localises to the kinetochore. The protein resides in the nucleus. It localises to the midbody. It is found in the cytoplasm. Its subcellular location is the cytoskeleton. The protein localises to the spindle. Functionally, regulates PLK1 kinase activity at kinetochores and promotes faithful chromosome segregation in prometaphase by bridging kinase and phosphatase activities. Phosphorylation of FIRRM by PLK1 negatively regulates its interaction with the phosphatase, PPP1CC, thus creating a negative feedback loop for maintaining proper PLK1 kinase activity during mitosis. In complex with FIGL1 may regulate homologous recombination. The sequence is that of FIGNL1-interacting regulator of recombination and mitosis from Mus musculus (Mouse).